Reading from the N-terminus, the 251-residue chain is Adenylate kinase (251 aa).

46–51 (GAGKGT) is a binding site for ATP. Residues 66-95 (ATGDMLRSQVQQQTPLGVEAKKIMDAGGLV) are NMP. AMP contacts are provided by residues Thr67, Arg72, 93-95 (GLV), 122-125 (GFPR), and Gln129. An LID region spans residues 163-200 (GRLVHPASGRSYHKVFNPPKKEMIDDITGEALVQRSDD). ATP is bound by residues Arg164 and 173–174 (SY). The AMP site is built by Arg197 and Arg208. ATP is bound at residue Gln236.

This sequence belongs to the adenylate kinase family. AK2 subfamily. In terms of assembly, monomer.

Its subcellular location is the cytoplasm. It localises to the cytosol. The protein localises to the mitochondrion intermembrane space. It catalyses the reaction AMP + ATP = 2 ADP. Functionally, catalyzes the reversible transfer of the terminal phosphate group between ATP and AMP. Plays an important role in cellular energy homeostasis and in adenine nucleotide metabolism. Adenylate kinase activity is critical for regulation of the phosphate utilization and the AMP de novo biosynthesis pathways. The chain is Adenylate kinase from Yarrowia lipolytica (strain CLIB 122 / E 150) (Yeast).